A 156-amino-acid chain; its full sequence is Small ribosomal subunit protein uS7 (156 aa).

It belongs to the universal ribosomal protein uS7 family. Part of the 30S ribosomal subunit. Contacts proteins S9 and S11.

Functionally, one of the primary rRNA binding proteins, it binds directly to 16S rRNA where it nucleates assembly of the head domain of the 30S subunit. Is located at the subunit interface close to the decoding center, probably blocks exit of the E-site tRNA. The chain is Small ribosomal subunit protein uS7 from Campylobacter jejuni subsp. jejuni serotype O:6 (strain 81116 / NCTC 11828).